Reading from the N-terminus, the 359-residue chain is Nicotinate-nucleotide--dimethylbenzimidazole phosphoribosyltransferase (359 aa).

E318 serves as the catalytic Proton acceptor.

The protein belongs to the CobT family. As to quaternary structure, homodimer.

The catalysed reaction is 5,6-dimethylbenzimidazole + nicotinate beta-D-ribonucleotide = alpha-ribazole 5'-phosphate + nicotinate + H(+). Its pathway is nucleoside biosynthesis; alpha-ribazole biosynthesis; alpha-ribazole from 5,6-dimethylbenzimidazole: step 1/2. In terms of biological role, catalyzes the synthesis of alpha-ribazole-5'-phosphate from nicotinate mononucleotide (NAMN) and 5,6-dimethylbenzimidazole (DMB). This chain is Nicotinate-nucleotide--dimethylbenzimidazole phosphoribosyltransferase, found in Shigella flexneri serotype 5b (strain 8401).